The sequence spans 111 residues: Iron-sulfur cluster insertion protein ErpA (111 aa).

3 residues coordinate iron-sulfur cluster: Cys-39, Cys-103, and Cys-105.

Belongs to the HesB/IscA family. In terms of assembly, homodimer. It depends on iron-sulfur cluster as a cofactor.

In terms of biological role, required for insertion of 4Fe-4S clusters for at least IspG. The chain is Iron-sulfur cluster insertion protein ErpA from Buchnera aphidicola subsp. Cinara cedri (strain Cc).